We begin with the raw amino-acid sequence, 261 residues long: Class II histocompatibility antigen, M alpha chain (261 aa).

The first 26 residues, 1-26 (MEHEQKSGAVLLRLLRLLWLLPHSWA), serve as a signal peptide directing secretion. Residues 27–124 (VLEASTPVLW…KLEGQIPVSR (98 aa)) are alpha-1. The Lumenal portion of the chain corresponds to 27-231 (VLEASTPVLW…ALPSDLLENA (205 aa)). A glycan (N-linked (GlcNAc...) asparagine) is linked at N41. 2 cysteine pairs are disulfide-bonded: C50–C105 and C147–C202. The Ig-like C1-type domain occupies 114–215 (PKLEGQIPVS…HEIDRYTAIA (102 aa)). The interval 125-217 (GLSVAEVFTL…IDRYTAIAYW (93 aa)) is alpha-2. The connecting peptide stretch occupies residues 218 to 231 (VPQNALPSDLLENA). The chain crosses the membrane as a helical span at residues 232-252 (LCGVAFALGVLGTIIGIVFFL). The Cytoplasmic segment spans residues 253–261 (CSQRPCSGD).

This sequence belongs to the MHC class II family. As to quaternary structure, heterodimer of an alpha chain (DMA) and a beta chain (DMB). Interacts with MHCII; this interaction mediates rapid selection of high-affinity peptides.

Its subcellular location is the late endosome membrane. It localises to the lysosome membrane. Functionally, plays a critical role in catalyzing the release of class II-associated invariant chain peptide (CLIP) from newly synthesized MHC class II molecules and freeing the peptide binding site for acquisition of antigenic peptides. This Mus musculus (Mouse) protein is Class II histocompatibility antigen, M alpha chain (H2-DMa).